Reading from the N-terminus, the 454-residue chain is F-box/WD repeat-containing protein 2 (454 aa).

The 48-residue stretch at 54-101 (RDFLKLLPLELSFYLLKWLDPQTLLTCCLVSKQWNKVISACTEVWQTA) folds into the F-box domain. WD repeat units follow at residues 146–183 (GHSARVYALYYKDGLLCTGSDDLSAKLWDVSTGQCVYG), 185–221 (QTHTCAAVKFDEQKLVTGSFDNTVACWEWSSGARTQH), 224–265 (GHTG…NTLT), and 276–314 (LQQCKVKSLLHSPGDYILLSADKYEIKIWPIGREINCKC). At K298 the chain carries N6-acetyllysine.

As to quaternary structure, directly interacts with SKP1 and CUL1.

Substrate-recognition component of the SCF (SKP1-CUL1-F-box protein)-type E3 ubiquitin ligase complex. This Rattus norvegicus (Rat) protein is F-box/WD repeat-containing protein 2.